The following is a 195-amino-acid chain: Glutathione S-transferase class-mu 26 kDa isozyme (195 aa).

The 83-residue stretch at 1–83 folds into the GST N-terminal domain; that stretch reads MAPKLGYWKI…YIADKHNMLG (83 aa). Glutathione-binding positions include 7 to 8, 41 to 45, 54 to 55, and 67 to 68; these read YW, WRNEK, NL, and QS. The GST C-terminal domain maps to 85 to 195; it reads CPKERAEISM…TFGGGDAPPK (111 aa). Substrate is bound at residue Tyr-111.

It belongs to the GST superfamily. Mu family. As to quaternary structure, homodimer.

It carries out the reaction RX + glutathione = an S-substituted glutathione + a halide anion + H(+). Conjugation of reduced glutathione to a wide number of exogenous and endogenous hydrophobic electrophiles. Its function is as follows. GST isoenzymes appear to play a central role in the parasite detoxification system. Other functions are also suspected including a role in increasing the solubility of haematin in the parasite gut. In Schistosoma mansoni (Blood fluke), this protein is Glutathione S-transferase class-mu 26 kDa isozyme.